The primary structure comprises 497 residues: D-gluconate dehydratase (497 aa).

Glu303 provides a ligand contact to Mg(2+). His305 (proton donor) is an active-site residue. The Mg(2+) site is built by Glu329 and Glu355. His405 functions as the Proton acceptor in the catalytic mechanism.

This sequence belongs to the mandelate racemase/muconate lactonizing enzyme family. GaD subfamily. Mg(2+) is required as a cofactor.

It catalyses the reaction D-gluconate = 2-dehydro-3-deoxy-D-gluconate + H2O. It functions in the pathway carbohydrate acid metabolism; D-gluconate degradation. In terms of biological role, involved in the degradation of glucose via the Entner-Doudoroff pathway. Catalyzes the dehydration of gluconate to produce 2-keto-3-deoxygluconate (KDG). It is not able to use D-galactonate as substrate. The sequence is that of D-gluconate dehydratase (gad) from Thermoproteus tenax.